Consider the following 321-residue polypeptide: Transaldolase (321 aa).

Lysine 132 functions as the Schiff-base intermediate with substrate in the catalytic mechanism.

This sequence belongs to the transaldolase family. Type 1 subfamily. In terms of assembly, homodimer.

Its subcellular location is the cytoplasm. The catalysed reaction is D-sedoheptulose 7-phosphate + D-glyceraldehyde 3-phosphate = D-erythrose 4-phosphate + beta-D-fructose 6-phosphate. It participates in carbohydrate degradation; pentose phosphate pathway; D-glyceraldehyde 3-phosphate and beta-D-fructose 6-phosphate from D-ribose 5-phosphate and D-xylulose 5-phosphate (non-oxidative stage): step 2/3. In terms of biological role, transaldolase is important for the balance of metabolites in the pentose-phosphate pathway. The chain is Transaldolase from Rhizobium etli (strain ATCC 51251 / DSM 11541 / JCM 21823 / NBRC 15573 / CFN 42).